A 273-amino-acid polypeptide reads, in one-letter code: BTB and MATH domain-containing protein 15 (273 aa).

The MATH domain maps to 7–123; sequence EFVFHHTFKD…DNSFTIEACV (117 aa). Residues 147–206 form the BTB domain; sequence SDVILVVGDEKFYVLKLFLASHSSYFNALFLGKFKEADQSEVTLQNIDPTDFQSLLEVLY.

As to quaternary structure, interacts with cul-3.

The protein operates within protein modification; protein ubiquitination. Probable substrate-specific adapter of an E3 ubiquitin-protein ligase complex which mediates the ubiquitination and subsequent proteasomal degradation of target proteins. This chain is BTB and MATH domain-containing protein 15 (bath-15), found in Caenorhabditis elegans.